Reading from the N-terminus, the 278-residue chain is UPF0750 membrane protein YxkD (278 aa).

The next 5 helical transmembrane spans lie at 8-28, 46-66, 77-97, 101-121, and 145-165; these read VLML…FAIP, LFQW…LLIG, YTII…GWSI, ELII…GMII, and ISYA…FIIG.

This sequence belongs to the UPF0750 family.

It is found in the cell membrane. This chain is UPF0750 membrane protein YxkD (yxkD), found in Bacillus subtilis (strain 168).